The following is a 93-amino-acid chain: Defensin-like protein 229 (93 aa).

The first 19 residues, 1–19 (MKSTTLFMVSCVLIFCVLS), serve as a signal peptide directing secretion. 4 disulfides stabilise this stretch: cysteine 38–cysteine 93, cysteine 48–cysteine 72, cysteine 56–cysteine 84, and cysteine 70–cysteine 86.

The protein belongs to the DEFL family. In terms of tissue distribution, flower buds.

The protein localises to the secreted. In Arabidopsis thaliana (Mouse-ear cress), this protein is Defensin-like protein 229 (SCRL27).